The primary structure comprises 1485 residues: Putative E3 ubiquitin-protein ligase LIN-2 (1485 aa).

The segment covering 337-353 (EENEDDSDSELDNESVD) has biased composition (acidic residues). 3 disordered regions span residues 337–363 (EENE…IFSP), 384–450 (NQIP…ISNA), and 462–507 (RKND…KLSM). The segment covering 438-450 (SSPDISIDNISNA) has biased composition (low complexity). Polar residues predominate over residues 466 to 484 (SQTPSMNQDNENSLVLNDS). Residues 510-585 (KPPKDFVCPI…TSWKEQNPEL (76 aa)) form the U-box domain. WD repeat units lie at residues 1194–1232 (SCKE…KVCD), 1246–1283 (EHTK…IKCI), 1409–1448 (SLST…RVAS), and 1454–1485 (GHTK…WALD).

The catalysed reaction is S-ubiquitinyl-[E2 ubiquitin-conjugating enzyme]-L-cysteine + [acceptor protein]-L-lysine = [E2 ubiquitin-conjugating enzyme]-L-cysteine + N(6)-ubiquitinyl-[acceptor protein]-L-lysine.. Its pathway is protein modification; protein ubiquitination. In terms of biological role, putative E3 ubiquitin-protein ligase involved in the rhizobial infection process. Plays an important role in the early steps of infection thread formation and in growth and differentiation of nodules. The sequence is that of Putative E3 ubiquitin-protein ligase LIN-2 from Lotus japonicus (Lotus corniculatus var. japonicus).